The chain runs to 314 residues: tRNA pseudouridine synthase B (314 aa).

D54 (nucleophile) is an active-site residue.

It belongs to the pseudouridine synthase TruB family. Type 1 subfamily.

It carries out the reaction uridine(55) in tRNA = pseudouridine(55) in tRNA. Its function is as follows. Responsible for synthesis of pseudouridine from uracil-55 in the psi GC loop of transfer RNAs. This chain is tRNA pseudouridine synthase B, found in Ralstonia nicotianae (strain ATCC BAA-1114 / GMI1000) (Ralstonia solanacearum).